The chain runs to 1416 residues: DNA-directed RNA polymerase subunit beta' (1416 aa).

Positions 71, 73, 86, and 89 each coordinate Zn(2+). Positions 461, 463, and 465 each coordinate Mg(2+). Positions 815, 892, 899, and 902 each coordinate Zn(2+).

It belongs to the RNA polymerase beta' chain family. In terms of assembly, the RNAP catalytic core consists of 2 alpha, 1 beta, 1 beta' and 1 omega subunit. When a sigma factor is associated with the core the holoenzyme is formed, which can initiate transcription. Requires Mg(2+) as cofactor. Zn(2+) serves as cofactor.

The catalysed reaction is RNA(n) + a ribonucleoside 5'-triphosphate = RNA(n+1) + diphosphate. Its function is as follows. DNA-dependent RNA polymerase catalyzes the transcription of DNA into RNA using the four ribonucleoside triphosphates as substrates. The protein is DNA-directed RNA polymerase subunit beta' of Blochmanniella pennsylvanica (strain BPEN).